The sequence spans 524 residues: Lysine--tRNA ligase (524 aa).

Residues Glu-433 and Glu-440 each contribute to the Mg(2+) site.

The protein belongs to the class-II aminoacyl-tRNA synthetase family. Homodimer. Mg(2+) is required as a cofactor.

The protein localises to the cytoplasm. It carries out the reaction tRNA(Lys) + L-lysine + ATP = L-lysyl-tRNA(Lys) + AMP + diphosphate. The chain is Lysine--tRNA ligase from Colwellia psychrerythraea (strain 34H / ATCC BAA-681) (Vibrio psychroerythus).